The primary structure comprises 154 residues: Large ribosomal subunit protein uL15 (154 aa).

A disordered region spans residues 1-61 (MDLSTLKPVA…GGQMPLMRRM (61 aa)).

This sequence belongs to the universal ribosomal protein uL15 family. Part of the 50S ribosomal subunit.

Functionally, binds to the 23S rRNA. The polypeptide is Large ribosomal subunit protein uL15 (Oenococcus oeni (strain ATCC BAA-331 / PSU-1)).